The chain runs to 198 residues: Holliday junction resolvase RecU (198 aa).

Positions 1–21 are disordered; that stretch reads MVNYPHKLSSQKRQPSLSQPK. Residues 11 to 21 are compositionally biased toward polar residues; sequence QKRQPSLSQPK. Mg(2+) contacts are provided by threonine 81, aspartate 83, glutamate 96, and glutamine 115.

Belongs to the RecU family. Mg(2+) serves as cofactor.

The protein localises to the cytoplasm. It carries out the reaction Endonucleolytic cleavage at a junction such as a reciprocal single-stranded crossover between two homologous DNA duplexes (Holliday junction).. Its function is as follows. Endonuclease that resolves Holliday junction intermediates in genetic recombination. Cleaves mobile four-strand junctions by introducing symmetrical nicks in paired strands. Promotes annealing of linear ssDNA with homologous dsDNA. Required for DNA repair, homologous recombination and chromosome segregation. This is Holliday junction resolvase RecU from Streptococcus pneumoniae (strain ATCC 700669 / Spain 23F-1).